We begin with the raw amino-acid sequence, 132 residues long: Small ribosomal subunit protein uS8 (132 aa).

Belongs to the universal ribosomal protein uS8 family. In terms of assembly, part of the 30S ribosomal subunit. Contacts proteins S5 and S12.

Its function is as follows. One of the primary rRNA binding proteins, it binds directly to 16S rRNA central domain where it helps coordinate assembly of the platform of the 30S subunit. The protein is Small ribosomal subunit protein uS8 of Streptococcus pneumoniae (strain Taiwan19F-14).